The following is a 359-amino-acid chain: UDP-N-acetylglucosamine--N-acetylmuramyl-(pentapeptide) pyrophosphoryl-undecaprenol N-acetylglucosamine transferase (359 aa).

UDP-N-acetyl-alpha-D-glucosamine contacts are provided by residues 13–15, N125, R161, S193, I241, and Q285; that span reads TAG.

This sequence belongs to the glycosyltransferase 28 family. MurG subfamily.

The protein resides in the cell membrane. It catalyses the reaction di-trans,octa-cis-undecaprenyl diphospho-N-acetyl-alpha-D-muramoyl-L-alanyl-D-glutamyl-meso-2,6-diaminopimeloyl-D-alanyl-D-alanine + UDP-N-acetyl-alpha-D-glucosamine = di-trans,octa-cis-undecaprenyl diphospho-[N-acetyl-alpha-D-glucosaminyl-(1-&gt;4)]-N-acetyl-alpha-D-muramoyl-L-alanyl-D-glutamyl-meso-2,6-diaminopimeloyl-D-alanyl-D-alanine + UDP + H(+). Its pathway is cell wall biogenesis; peptidoglycan biosynthesis. Cell wall formation. Catalyzes the transfer of a GlcNAc subunit on undecaprenyl-pyrophosphoryl-MurNAc-pentapeptide (lipid intermediate I) to form undecaprenyl-pyrophosphoryl-MurNAc-(pentapeptide)GlcNAc (lipid intermediate II). The chain is UDP-N-acetylglucosamine--N-acetylmuramyl-(pentapeptide) pyrophosphoryl-undecaprenol N-acetylglucosamine transferase from Corynebacterium diphtheriae (strain ATCC 700971 / NCTC 13129 / Biotype gravis).